The following is a 690-amino-acid chain: Tripartite terminase subunit 3 (690 aa).

Residues 226-233 carry the Walker A motif motif; that stretch reads IPRRHGKT. The Walker B motif signature appears at 321–326; it reads LLFVDE. The For ATPase activity role is filled by Glu-326. Active-site for nuclease activity residues include Asp-481, Glu-555, and Asp-667.

Belongs to the herpesviridae TRM3 protein family. As to quaternary structure, interacts with the terminase subunits TRM1 and TRM2. Interacts with portal protein.

The protein resides in the host nucleus. In terms of biological role, component of the molecular motor that translocates viral genomic DNA in empty capsid during DNA packaging. Forms a tripartite terminase complex together with TRM1 and TRM2 in the host cytoplasm. Once the complex reaches the host nucleus, it interacts with the capsid portal vertex. This portal forms a ring in which genomic DNA is translocated into the capsid. TRM3 carries an RNase H-like nuclease activity that plays an important role for the cleavage of concatemeric viral DNA into unit length genomes. The polypeptide is Tripartite terminase subunit 3 (Homo sapiens (Human)).